The primary structure comprises 269 residues: 4-hydroxy-tetrahydrodipicolinate reductase (269 aa).

NAD(+) is bound by residues 10–15 (GANGRM), glutamate 36, 99–101 (GTT), and 123–126 (AANF). Histidine 156 (proton donor/acceptor) is an active-site residue. Histidine 157 is a (S)-2,3,4,5-tetrahydrodipicolinate binding site. Catalysis depends on lysine 160, which acts as the Proton donor. 166 to 167 (GT) serves as a coordination point for (S)-2,3,4,5-tetrahydrodipicolinate.

The protein belongs to the DapB family.

The protein localises to the cytoplasm. It carries out the reaction (S)-2,3,4,5-tetrahydrodipicolinate + NAD(+) + H2O = (2S,4S)-4-hydroxy-2,3,4,5-tetrahydrodipicolinate + NADH + H(+). The catalysed reaction is (S)-2,3,4,5-tetrahydrodipicolinate + NADP(+) + H2O = (2S,4S)-4-hydroxy-2,3,4,5-tetrahydrodipicolinate + NADPH + H(+). It functions in the pathway amino-acid biosynthesis; L-lysine biosynthesis via DAP pathway; (S)-tetrahydrodipicolinate from L-aspartate: step 4/4. Its function is as follows. Catalyzes the conversion of 4-hydroxy-tetrahydrodipicolinate (HTPA) to tetrahydrodipicolinate. This chain is 4-hydroxy-tetrahydrodipicolinate reductase, found in Neisseria meningitidis serogroup A / serotype 4A (strain DSM 15465 / Z2491).